A 396-amino-acid chain; its full sequence is Pinosylvin synthase 2 (396 aa).

Substrate is bound at residue 60–63 (KFKR). Cysteine 170 is an active-site residue. Residues leucine 273 and 311–313 (GGR) contribute to the substrate site.

It belongs to the thiolase-like superfamily. Chalcone/stilbene synthases family. In terms of assembly, homodimer.

It is found in the cytoplasm. The catalysed reaction is (E)-cinnamoyl-CoA + 3 malonyl-CoA + 3 H(+) = (E)-pinosylvin + 4 CO2 + 4 CoA. It catalyses the reaction 3-phenylpropanoyl-CoA + 3 malonyl-CoA + 3 H(+) = dihydropinosylvin + 4 CO2 + 4 CoA. It functions in the pathway phytoalexin biosynthesis; pinosylvin biosynthesis. Catalyzes the production of pinosylvin from cinnamoyl-CoA and malonyl-CoA, and dihydropinosylvin from dihydrocinnamoyl-CoA. The sequence is that of Pinosylvin synthase 2 from Pinus strobus (Eastern white pine).